The sequence spans 1292 residues: (E3-independent) E2 ubiquitin-conjugating enzyme (1292 aa).

Pro residues predominate over residues 1-37 (MADPAAPTPAAPAPAQAPAPAPEAVPAPAAAPVPAPA). Disordered stretches follow at residues 1–56 (MADP…EAGS) and 85–114 (EDSDSEGEEEGRGSSGCSEAGGAGHEEGRA). The span at 38–56 (PASDSASGPSSDSGPEAGS) shows a compositional bias: low complexity. 5 positions are modified to phosphoserine: serine 50, serine 87, serine 89, serine 399, and serine 401. Disordered stretches follow at residues 401–459 (SPDT…AGEQ), 472–519 (RLHS…IPLS), and 714–746 (IEESDYDSVEGSTSGASSDEWEDDSDSWETDNG). Residues 406–427 (CSRDHSMEDPDKKGESKTKSEA) show a composition bias toward basic and acidic residues. Serine 441 carries the phosphoserine modification. Positions 478 to 490 (QDADDEAADDTDD) are enriched in acidic residues. Threonine 488 and threonine 491 each carry phosphothreonine. Low complexity predominate over residues 491-510 (TSSVTSSASSTTSSQSGSGT). The Nuclear localization signal motif lies at 512 to 536 (RKKSIPLSIKNLKRKHKRKKNKITR). Serine 515 is modified (phosphoserine). Acidic residues predominate over residues 732–742 (DEWEDDSDSWE). Residues 812–882 (RELKEAIKIL…IVEEEKMEAV (71 aa)) are a coiled coil. At serine 836 the chain carries Phosphoserine. Threonine 838 is subject to Phosphothreonine. Serine 839 is modified (phosphoserine). The segment covering 882–893 (VPDVERKEDKPE) has biased composition (basic and acidic residues). Residues 882-903 (VPDVERKEDKPEGQSPVKAEWP) are disordered. The residue at position 896 (serine 896) is a Phosphoserine. A UBC core domain is found at 953-1113 (KFFSTVRKEM…ALIRVVQSMT (161 aa)). The active-site Glycyl thioester intermediate is the cysteine 1040. The interval 1160 to 1248 (NGVPKASSSP…KSYRSFLPEK (89 aa)) is disordered.

Belongs to the ubiquitin-conjugating enzyme family. Interacts with CPNE1 (via VWFA domain) and CPNE4 (via VWFA domain). Interacts with UBR2. In terms of processing, phosphorylated. Phosphorylation affects subcellular location. Ubiquitinated: autoubiquitinates, possibly affecting its subcellular location. As to expression, predominantly expressed in skeletal muscle and heart.

It is found in the cytoplasm. It localises to the nucleus. The enzyme catalyses S-ubiquitinyl-[E1 ubiquitin-activating enzyme]-L-cysteine + [acceptor protein]-L-lysine = [E1 ubiquitin-activating enzyme]-L-cysteine + N(6)-monoubiquitinyl-[acceptor protein]-L-lysine.. Its pathway is protein modification; protein ubiquitination. With respect to regulation, inhibited by phenylarsine oxide (PAO). Functionally, E2/E3 hybrid ubiquitin-protein ligase that displays both E2 and E3 ligase activities and mediates monoubiquitination of target proteins. Negatively regulates TRAF6-mediated NF-kappa-B activation independently of its E2 activity. Acts as a positive regulator of BMP7 signaling by mediating monoubiquitination of SMAD6, thereby regulating adipogenesis. Mediates monoubiquitination at different sites of the nuclear localization signal (NLS) of BAP1, leading to cytoplasmic retention of BAP1. Also able to monoubiquitinate the NLS of other chromatin-associated proteins, such as INO80 and CXXC1, affecting their subcellular location. Acts as a regulator of retrograde transport by assisting the TRIM27:MAGEL2 E3 ubiquitin ligase complex to mediate 'Lys-63'-linked ubiquitination of WASHC1, leading to promote endosomal F-actin assembly. The chain is (E3-independent) E2 ubiquitin-conjugating enzyme (UBE2O) from Homo sapiens (Human).